A 247-amino-acid chain; its full sequence is ATP synthase subunit a (247 aa).

6 consecutive transmembrane segments (helical) span residues 26-46 (ITNN…LFYV), 85-105 (YFPL…IGLL), 115-135 (IIFT…INFF), 141-161 (FFNL…LVVI), 178-198 (FANM…IFNV), and 205-225 (ISFL…CIAI).

The protein belongs to the ATPase A chain family. In terms of assembly, F-type ATPases have 2 components, CF(1) - the catalytic core - and CF(0) - the membrane proton channel. CF(1) has five subunits: alpha(3), beta(3), gamma(1), delta(1), epsilon(1). CF(0) has three main subunits: a, b and c.

The protein localises to the mitochondrion inner membrane. Its function is as follows. Mitochondrial membrane ATP synthase (F(1)F(0) ATP synthase or Complex V) produces ATP from ADP in the presence of a proton gradient across the membrane which is generated by electron transport complexes of the respiratory chain. F-type ATPases consist of two structural domains, F(1) - containing the extramembraneous catalytic core and F(0) - containing the membrane proton channel, linked together by a central stalk and a peripheral stalk. During catalysis, ATP synthesis in the catalytic domain of F(1) is coupled via a rotary mechanism of the central stalk subunits to proton translocation. Key component of the proton channel; it may play a direct role in the translocation of protons across the membrane. This chain is ATP synthase subunit a (ATP6), found in Acanthamoeba castellanii (Amoeba).